The following is a 354-amino-acid chain: Guanine nucleotide-binding protein subunit alpha-14 (354 aa).

Residues 33–354 enclose the G-alpha domain; the sequence is RELKLLLLGT…QLNLREFNLV (322 aa). The G1 motif stretch occupies residues 36–49; sequence KLLLLGTGESGKST. GTP contacts are provided by residues 41–48, 175–181, 200–204, 269–272, and Ala-326; these read GTGESGKS, LRVRVPT, DVGGQ, and NKKD. The Mg(2+) site is built by Ser-48 and Thr-181. The tract at residues 173 to 181 is G2 motif; the sequence is DVLRVRVPT. A G3 motif region spans residues 196 to 205; that stretch reads FRMVDVGGQR. The G4 motif stretch occupies residues 265–272; that stretch reads ILFLNKKD. The G5 motif stretch occupies residues 324–329; sequence TCATDT.

Belongs to the G-alpha family. G(q) subfamily. In terms of assembly, g proteins are composed of 3 units; alpha, beta and gamma. The alpha chain contains the guanine nucleotide binding site.

Guanine nucleotide-binding proteins (G proteins) are involved as modulators or transducers in various transmembrane signaling systems. Acts as an activator of phospholipase C. Mediates responses to trypsin. The chain is Guanine nucleotide-binding protein subunit alpha-14 (gna14) from Xenopus laevis (African clawed frog).